A 742-amino-acid chain; its full sequence is MELHSRGRHDAPSLSSLSERERRARRARRFCLDYEPVPRKFRRERSPTSPSTRNGAAASEYHLAEDTVGAASHHHRPCVPARRPRYSKDDDTEGDPDHYPPPLPPSSRHALGGTGGHIIMGTAGFRGGHRASSSFKRRVAASASVPLNPHYGKSYDNDDGEPHHHGGDSTHLRRRVPSCPTTFGSSHPSSANNHHGSSAGPQQQQMLALIDDELDAMDEDELQQLSRLIEKKKRARLQRGAASSGTSPSSTSPVYDLQRYTAESLRLAPYPADLKVPTAFPQDHQPRGRILLSHDELMHTDYLLHIRQQFDWLEEPLLRKLVVEKIFAVYNAPNLHTLLAIIDETLSYMKYHHLHGLPVNPHDPYLETVGGMRQLLFNKLNNLDLGCILDHQDGWGDHCSTLKRLVKKPGQMSAWLRDDVCDLQKRPPETFSQPMHRAMAYVCSFSRVAVSLRRRALQVTGTPQFFDQFDTNNAMGTYRCGAVSDLILGALQCHECQNEMCELRIQRALAPYRFMIAYCPFDEQSLLDLTVFAGTTTTTASNHATAGGQQRGGDQIHPTDEQCASMESRTDPATLTAYDKKDREGSHRHPSPMIAAAAPPAQPPSQPQQHYSEGELEEDEDSDDASSQDLVRATDRHGDTVVYKTTAVPPSPPAPLAGVRSHRGELNLMTPSPSHGGSPPQVPHKQPIIPVQSANGNHSTTATQQQQPPPPPPVPQEDDSVVMRCQTPDYEDMLCYSDDMDD.

Basic and acidic residues predominate over residues 1 to 11 (MELHSRGRHDA). The interval 1–202 (MELHSRGRHD…NHHGSSAGPQ (202 aa)) is disordered. Basic residues predominate over residues 72–85 (SHHHRPCVPARRPR). Positions 153-171 (KSYDNDDGEPHHHGGDSTH) are enriched in basic and acidic residues. Residues 179–202 (CPTTFGSSHPSSANNHHGSSAGPQ) show a composition bias toward polar residues. Residues Cys-387, His-494, Cys-496, and Cys-501 each coordinate Zn(2+). A CHC2-type zinc finger spans residues 387–501 (CILDHQDGWG…QCHECQNEMC (115 aa)). The interval 540–742 (ASNHATAGGQ…MLCYSDDMDD (203 aa)) is disordered. Residues 578 to 587 (YDKKDREGSH) are compositionally biased toward basic and acidic residues. Acidic residues predominate over residues 614-626 (GELEEDEDSDDAS). Residues 692-703 (QSANGNHSTTAT) show a composition bias toward polar residues.

The protein belongs to the HHV-1 ICP27 protein family. Self-associates and forms high-molecular-mass complexes. Interacts with host DDX39A and DDX39B; these interactions are required for UL69 function in mRNA export. Interacts with host SUPT6H, EIF4A1 and PABPC1. In terms of processing, phosphorylated by UL97 and host CDK1, CDK7 and CD9. Phosphorylation by CDKs impacts on UL69 nuclear localization and activity.

Its subcellular location is the virion tegument. It is found in the virion. The protein localises to the host nucleus. It localises to the host cytoplasm. Its function is as follows. Immediate early (EI) protein that plays many roles during productive infection including regulation of host cell cycle progression, regulation of viral gene expression or nuclear export of intronless viral RNAs. Acts as a transcriptional transactivator via interaction with the cellular transcription elongation factor SUPT6H and as a nuclear RNA export factor via interaction with UAP56, a component of the cellular mRNA export machinery. This is mRNA export factor ICP27 homolog from Human cytomegalovirus (strain Merlin) (HHV-5).